A 103-amino-acid polypeptide reads, in one-letter code: Ig lambda chain C region (103 aa).

In terms of domain architecture, Ig-like spans 6-99 (PTITLFPPSK…NGTSITKTLK (94 aa)). Cys28 and Cys85 form a disulfide bridge.

The polypeptide is Ig lambda chain C region (Gallus gallus (Chicken)).